The following is a 663-amino-acid chain: UvrABC system protein B (663 aa).

Residues 1-10 (MIDKRDDKPF) show a composition bias toward basic and acidic residues. The interval 1–23 (MIDKRDDKPFKLKSKYKPSGDQP) is disordered. The Helicase ATP-binding domain maps to 31-418 (DNIEGGEKAQ…TNTIIEQIIR (388 aa)). Residue 44-51 (GATGTGKT) coordinates ATP. The Beta-hairpin signature appears at 97–120 (YYDYYQPEAYVPSSDTYIEKDSSV). One can recognise a Helicase C-terminal domain in the interval 435-601 (QMDDLLGEIN…TIKKDIRGLI (167 aa)). One can recognise a UVR domain in the interval 627 to 662 (KEAINALQKQMQEAAELLDFELAAQMRDLILELKLM).

This sequence belongs to the UvrB family. As to quaternary structure, forms a heterotetramer with UvrA during the search for lesions. Interacts with UvrC in an incision complex.

Its subcellular location is the cytoplasm. Its function is as follows. The UvrABC repair system catalyzes the recognition and processing of DNA lesions. A damage recognition complex composed of 2 UvrA and 2 UvrB subunits scans DNA for abnormalities. Upon binding of the UvrA(2)B(2) complex to a putative damaged site, the DNA wraps around one UvrB monomer. DNA wrap is dependent on ATP binding by UvrB and probably causes local melting of the DNA helix, facilitating insertion of UvrB beta-hairpin between the DNA strands. Then UvrB probes one DNA strand for the presence of a lesion. If a lesion is found the UvrA subunits dissociate and the UvrB-DNA preincision complex is formed. This complex is subsequently bound by UvrC and the second UvrB is released. If no lesion is found, the DNA wraps around the other UvrB subunit that will check the other stand for damage. This is UvrABC system protein B from Streptococcus pyogenes serotype M3 (strain ATCC BAA-595 / MGAS315).